We begin with the raw amino-acid sequence, 397 residues long: Phosphoglycerate kinase (397 aa).

Substrate contacts are provided by residues 22–24, Arg38, 61–64, Arg119, and Arg152; these read DYN and HLGR. Residues Lys203, Gly294, Glu325, and 351–354 contribute to the ATP site; that span reads GGDT.

It belongs to the phosphoglycerate kinase family. Monomer.

It localises to the cytoplasm. It carries out the reaction (2R)-3-phosphoglycerate + ATP = (2R)-3-phospho-glyceroyl phosphate + ADP. The protein operates within carbohydrate degradation; glycolysis; pyruvate from D-glyceraldehyde 3-phosphate: step 2/5. This Aquifex aeolicus (strain VF5) protein is Phosphoglycerate kinase (pgk).